The primary structure comprises 1096 residues: Lysine-specific demethylase PHF2 (1096 aa).

A PHD-type zinc finger spans residues proline 5–threonine 56. 2-oxoglutarate is bound by residues threonine 193 and threonine 246. A JmjC domain is found at phenylalanine 197–arginine 353. 2 residues coordinate Fe cation: histidine 249 and aspartate 251. The 2-oxoglutarate site is built by tyrosine 259, lysine 266, tyrosine 321, and threonine 323. A Fe cation-binding site is contributed by tyrosine 321. 2 disordered regions span residues lysine 447–lysine 634 and glycine 646–arginine 674. Serine 474 is modified (phosphoserine). Position 479 is a phosphothreonine (threonine 479). The span at serine 503–proline 518 shows a compositional bias: pro residues. Serine 539 carries the post-translational modification Phosphoserine. Basic and acidic residues-rich tracts occupy residues leucine 548 to lysine 563 and aspartate 578 to lysine 624. Serine 655 carries the post-translational modification Phosphoserine. Over residues phenylalanine 665–arginine 674 the composition is skewed to basic and acidic residues. Serine 681 and serine 705 each carry phosphoserine. A Glycyl lysine isopeptide (Lys-Gly) (interchain with G-Cter in SUMO2) cross-link involves residue lysine 711. Disordered regions lie at residues threonine 719–leucine 799, alanine 817–leucine 846, and tyrosine 877–alanine 1078. N6-acetyllysine is present on lysine 720. Residue tyrosine 728 is modified to Phosphotyrosine. Residues lysine 729–serine 757 are compositionally biased toward basic and acidic residues. A phosphoserine mark is found at serine 730, serine 733, serine 734, and serine 738. Residues serine 879, serine 882, and serine 899 each carry the phosphoserine modification. Residues arginine 916–threonine 925 show a composition bias toward basic and acidic residues. Residues serine 949 to leucine 959 show a composition bias toward basic residues. 2 stretches are compositionally biased toward low complexity: residues threonine 960 to serine 1009 and threonine 1027 to threonine 1040. Positions arginine 1053–alanine 1065 are enriched in polar residues. Position 1056 is a phosphoserine; by PKA (serine 1056).

It belongs to the JHDM1 histone demethylase family. JHDM1D subfamily. Component of the PHF2-ARID5B complex, at least composed of PHF2 and ARID5B. Interacts with HNF4A and NR1H4. Interacts with RELA. In terms of processing, phosphorylated by PKA on specific serine residues, leading to the formation of an active lysine demethylase complex. Widely expressed, including in liver (at protein level).

Its subcellular location is the nucleus. It is found in the nucleolus. The protein resides in the chromosome. The protein localises to the centromere. It localises to the kinetochore. It carries out the reaction N(6),N(6)-dimethyl-L-lysyl(9)-[histone H3] + 2-oxoglutarate + O2 = N(6)-methyl-L-lysyl(9)-[histone H3] + formaldehyde + succinate + CO2. Its activity is regulated as follows. Enzymatically inactive by itself, and become active following phosphorylation by PKA. Its function is as follows. Lysine demethylase that demethylates both histones and non-histone proteins. Enzymatically inactive by itself, and becomes active following phosphorylation by PKA: forms a complex with ARID5B and mediates demethylation of methylated ARID5B. Demethylation of ARID5B leads to target the PHF2-ARID5B complex to target promoters, where PHF2 mediates demethylation of dimethylated 'Lys-9' of histone H3 (H3K9me2), followed by transcription activation of target genes. The PHF2-ARID5B complex acts as a coactivator of HNF4A in liver. PHF2 is recruited to trimethylated 'Lys-4' of histone H3 (H3K4me3) at rDNA promoters and promotes expression of rDNA. Involved in the activation of toll-like receptor 4 (TLR4)-target inflammatory genes in macrophages by catalyzing the demethylation of trimethylated histone H4 lysine 20 (H4K20me3) at the gene promoters. The protein is Lysine-specific demethylase PHF2 of Homo sapiens (Human).